Here is a 114-residue protein sequence, read N- to C-terminus: Probable acid stress chaperone HdeA (114 aa).

A signal peptide spans 1-26 (MIKTLFNKNTALAAVAILALSGSAMA). A disulfide bond links Cys46 and Cys94.

This sequence belongs to the HdeA family.

It is found in the periplasm. In terms of biological role, required for optimal acid stress protection. Exhibits a chaperone-like activity only at low pH by suppressing non-specifically the aggregation of denaturated periplasmic proteins. The chain is Probable acid stress chaperone HdeA from Brucella ovis (strain ATCC 25840 / 63/290 / NCTC 10512).